The sequence spans 366 residues: Alanine racemase (366 aa).

The active-site Proton acceptor; specific for D-alanine is the K40. Position 40 is an N6-(pyridoxal phosphate)lysine (K40). R136 contacts substrate. Y263 functions as the Proton acceptor; specific for L-alanine in the catalytic mechanism. Residue M310 participates in substrate binding.

Belongs to the alanine racemase family. The cofactor is pyridoxal 5'-phosphate.

The catalysed reaction is L-alanine = D-alanine. It functions in the pathway amino-acid biosynthesis; D-alanine biosynthesis; D-alanine from L-alanine: step 1/1. Catalyzes the interconversion of L-alanine and D-alanine. May also act on other amino acids. The sequence is that of Alanine racemase (alr) from Streptococcus pyogenes serotype M5 (strain Manfredo).